The following is a 513-amino-acid chain: Activin receptor type-2A (513 aa).

The first 19 residues, 1–19, serve as a signal peptide directing secretion; it reads MGAAAKLAFAVFLISCSSG. Topologically, residues 20–135 are extracellular; that stretch reads AILGRSETQE…TSNPVTPKPP (116 aa). Intrachain disulfides connect Cys-30-Cys-60, Cys-50-Cys-78, Cys-85-Cys-104, Cys-91-Cys-103, and Cys-105-Cys-110. Residues Asn-43 and Asn-66 are each glycosylated (N-linked (GlcNAc...) asparagine). Residues 136-161 traverse the membrane as a helical segment; the sequence is YYNILLYSLVPLMLVAGIVICAFWVY. Over 162-513 the chain is Cytoplasmic; sequence RHHKMAYPPV…VDFPPKESSL (352 aa). In terms of domain architecture, Protein kinase spans 192–485; the sequence is LQLLEVKARG…GERITQMQRL (294 aa). ATP contacts are provided by residues 198-206 and Lys-219; that span reads KARGGFGCV. The active-site Proton acceptor is the Asp-322.

This sequence belongs to the protein kinase superfamily. TKL Ser/Thr protein kinase family. TGFB receptor subfamily. Part of a complex consisting of MAGI2/ARIP1, ACVR2A, ACVR1B and SMAD3. Interacts with MAGI2/ARIP1. Interacts with type I receptor ACVR1. Interacts with TSC22D1/TSC-22. Interacts with activin A/INHBA. Requires Mg(2+) as cofactor. Mn(2+) is required as a cofactor.

It localises to the cell membrane. It carries out the reaction L-threonyl-[receptor-protein] + ATP = O-phospho-L-threonyl-[receptor-protein] + ADP + H(+). The catalysed reaction is L-seryl-[receptor-protein] + ATP = O-phospho-L-seryl-[receptor-protein] + ADP + H(+). In terms of biological role, on ligand binding, forms a receptor complex consisting of two type II and two type I transmembrane serine/threonine kinases. Type II receptors phosphorylate and activate type I receptors which autophosphorylate, then bind and activate SMAD transcriptional regulators. Receptor for activin A, activin B and inhibin A. Mediates induction of adipogenesis by GDF6. The chain is Activin receptor type-2A (ACVR2A) from Ovis aries (Sheep).